The sequence spans 700 residues: Putative ankyrin repeat protein FPV018 (700 aa).

ANK repeat units lie at residues 29 to 59 (DRLLSLHNILKENNVDRLRELIESDKDVINM), 63 to 92 (NRLLPLHIAIEHSDIEIVEMLLDNNAVING), 126 to 155 (RIRRLLTVNNTEKYTKIVKLLIKHGADLKM), 204 to 233 (MRRITIKCAIRAVNIELVKHFISNNLLADT), 236 to 265 (ALEDYFLEAVKTNSPKMVKLFLDSGIDINS), 270 to 299 (NSHTALYHAVEQENVTLVMLLLNHGADPDI), 301 to 332 (DIYSMLKYAIMSSKHGVKLFNILVKNGARIRC), 395 to 424 (CNMYPIHAAVSINTSRLTRLLINKGADVNV), 428 to 457 (YGKTPIHLACMYSKIGNIKVLIKNGANVNE), 461 to 490 (YGITPLMICSREGKVSNMEYLLANGADVNQ), and 494 to 523 (DKNTALTYAIRNKSKECTRVLLEHGADMCF).

This is Putative ankyrin repeat protein FPV018 from Fowlpox virus (strain NVSL) (FPV).